A 305-amino-acid chain; its full sequence is Oligopeptide transport ATP-binding protein OppF (305 aa).

The ABC transporter domain occupies 6-251; the sequence is LEIKHLKQHF…PLHPYTKSLL (246 aa). 42-49 is a binding site for ATP; it reads GESGCGKS.

It belongs to the ABC transporter superfamily. The complex is composed of two ATP-binding proteins (OppD and OppF), two transmembrane proteins (OppB and OppC) and a solute-binding protein (OppA).

It localises to the cell membrane. It carries out the reaction a [peptide](out) + ATP + H2O = a [peptide](in) + ADP + phosphate + H(+). In terms of biological role, part of the ABC transporter complex OppABCDF involved in the uptake of oligopeptides. Probably responsible for energy coupling to the transport system. Required for genetic competence but not for peptide transport or for sporulation. In Bacillus subtilis (strain 168), this protein is Oligopeptide transport ATP-binding protein OppF.